The primary structure comprises 879 residues: Alanine--tRNA ligase (879 aa).

Residues 426–449 are disordered; the sequence is KQKERARNARGNMDGESWKEDPLS. Residues His566, His570, Cys668, and His672 each contribute to the Zn(2+) site.

It belongs to the class-II aminoacyl-tRNA synthetase family. The cofactor is Zn(2+).

The protein localises to the cytoplasm. The catalysed reaction is tRNA(Ala) + L-alanine + ATP = L-alanyl-tRNA(Ala) + AMP + diphosphate. Catalyzes the attachment of alanine to tRNA(Ala) in a two-step reaction: alanine is first activated by ATP to form Ala-AMP and then transferred to the acceptor end of tRNA(Ala). Also edits incorrectly charged Ser-tRNA(Ala) and Gly-tRNA(Ala) via its editing domain. This Clostridioides difficile (strain 630) (Peptoclostridium difficile) protein is Alanine--tRNA ligase.